The chain runs to 79 residues: Acyl carrier protein (79 aa).

Positions Q3–K78 constitute a Carrier domain. S38 is subject to O-(pantetheine 4'-phosphoryl)serine.

The protein belongs to the acyl carrier protein (ACP) family. 4'-phosphopantetheine is transferred from CoA to a specific serine of apo-ACP by AcpS. This modification is essential for activity because fatty acids are bound in thioester linkage to the sulfhydryl of the prosthetic group.

The protein resides in the cytoplasm. The protein operates within lipid metabolism; fatty acid biosynthesis. Functionally, carrier of the growing fatty acid chain in fatty acid biosynthesis. This is Acyl carrier protein from Prochlorococcus marinus (strain MIT 9312).